A 282-amino-acid chain; its full sequence is Bifunctional protein FolD (282 aa).

Residues 164–166 (GRS) and Ser189 each bind NADP(+).

Belongs to the tetrahydrofolate dehydrogenase/cyclohydrolase family. Homodimer.

It catalyses the reaction (6R)-5,10-methylene-5,6,7,8-tetrahydrofolate + NADP(+) = (6R)-5,10-methenyltetrahydrofolate + NADPH. It carries out the reaction (6R)-5,10-methenyltetrahydrofolate + H2O = (6R)-10-formyltetrahydrofolate + H(+). It participates in one-carbon metabolism; tetrahydrofolate interconversion. Its function is as follows. Catalyzes the oxidation of 5,10-methylenetetrahydrofolate to 5,10-methenyltetrahydrofolate and then the hydrolysis of 5,10-methenyltetrahydrofolate to 10-formyltetrahydrofolate. This chain is Bifunctional protein FolD, found in Anaeromyxobacter dehalogenans (strain 2CP-C).